Here is a 138-residue protein sequence, read N- to C-terminus: DNA-directed RNA polymerase subunit omega (138 aa).

The protein belongs to the RNA polymerase subunit omega family. In terms of assembly, the RNAP catalytic core consists of 2 alpha, 1 beta, 1 beta' and 1 omega subunit. When a sigma factor is associated with the core the holoenzyme is formed, which can initiate transcription.

The catalysed reaction is RNA(n) + a ribonucleoside 5'-triphosphate = RNA(n+1) + diphosphate. Promotes RNA polymerase assembly. Latches the N- and C-terminal regions of the beta' subunit thereby facilitating its interaction with the beta and alpha subunits. The sequence is that of DNA-directed RNA polymerase subunit omega from Thermodesulfovibrio yellowstonii (strain ATCC 51303 / DSM 11347 / YP87).